Here is a 351-residue protein sequence, read N- to C-terminus: Biotin synthase (351 aa).

Positions 44 to 262 constitute a Radical SAM core domain; that stretch reads NRVQVSTLLS…LAVARILMPQ (219 aa). Residues Cys59, Cys63, and Cys66 each contribute to the [4Fe-4S] cluster site. 4 residues coordinate [2Fe-2S] cluster: Cys103, Cys134, Cys194, and Arg266.

The protein belongs to the radical SAM superfamily. Biotin synthase family. Homodimer. [4Fe-4S] cluster is required as a cofactor. The cofactor is [2Fe-2S] cluster.

It catalyses the reaction (4R,5S)-dethiobiotin + (sulfur carrier)-SH + 2 reduced [2Fe-2S]-[ferredoxin] + 2 S-adenosyl-L-methionine = (sulfur carrier)-H + biotin + 2 5'-deoxyadenosine + 2 L-methionine + 2 oxidized [2Fe-2S]-[ferredoxin]. It functions in the pathway cofactor biosynthesis; biotin biosynthesis; biotin from 7,8-diaminononanoate: step 2/2. Catalyzes the conversion of dethiobiotin (DTB) to biotin by the insertion of a sulfur atom into dethiobiotin via a radical-based mechanism. This Pseudomonas fluorescens (strain Pf0-1) protein is Biotin synthase.